The primary structure comprises 189 residues: Effector protein NleF (189 aa).

An interaction with host caspases region spans residues Leu-186–Gly-189.

In terms of assembly, monomer. Interacts (via C-terminus) with human CASP4, CASP8 and CASP9.

It localises to the secreted. The protein localises to the host cytoplasm. Its function is as follows. Effector protein that alters host cell physiology and promotes bacterial survival in host tissues. Inhibits the catalytic activity of human CASP4, CASP8 and CASP9, and thereby inhibits apoptosis of infected host cells. The polypeptide is Effector protein NleF (nleF) (Escherichia coli O157:H7).